A 246-amino-acid polypeptide reads, in one-letter code: Major prion protein (246 aa).

The N-terminal stretch at 1–15 (MLVLFVATWSDLGLC) is a signal peptide. An interaction with GRB2, ERI3 and SYN1 region spans residues 16–223 (KKRPKPGGWN…ESQAYYQRGS (208 aa)). Residues 18–102 (RPKPGGWNTG…HKPSKPKTSM (85 aa)) are disordered. Repeat copies occupy residues 44–52 (PQGGGGWGQ), 53–60 (PHGGGWGQ), 61–68 (PHGGGWGQ), 69–76 (PHGGGWGQ), and 77–84 (PHGGGWGQ). Residues 44-84 (PQGGGGWGQPHGGGWGQPHGGGWGQPHGGGWGQPHGGGWGQ) form a 5 X 8 AA tandem repeats of P-H-G-G-G-W-G-Q region. Residues 45–88 (QGGGGWGQPHGGGWGQPHGGGWGQPHGGGWGQPHGGGWGQGGGT) are compositionally biased toward gly residues. His54, Gly55, Gly56, His62, Gly63, Gly64, His70, Gly71, Gly72, His78, Gly79, and Gly80 together coordinate Cu(2+). Over residues 91 to 102 (QWHKPSKPKTSM) the composition is skewed to basic residues. An intrachain disulfide couples Cys172 to Cys207. N-linked (GlcNAc...) asparagine glycans are attached at residues Asn174 and Asn190. Residue Ser223 is the site of GPI-anchor amidated serine attachment. Positions 224–246 (SMVLFSSPPVILLISFLIFLIVG) are cleaved as a propeptide — removed in mature form.

Belongs to the prion family. In terms of assembly, monomer and homodimer. Has a tendency to aggregate into amyloid fibrils containing a cross-beta spine, formed by a steric zipper of superposed beta-strands. Soluble oligomers may represent an intermediate stage on the path to fibril formation. Copper binding may promote oligomerization. Interacts with GRB2, APP, ERI3/PRNPIP and SYN1. Mislocalized cytosolically exposed PrP interacts with MGRN1; this interaction alters MGRN1 subcellular location and causes lysosomal enlargement. Interacts with KIAA1191.

It is found in the cell membrane. The protein localises to the golgi apparatus. In terms of biological role, its primary physiological function is unclear. Has cytoprotective activity against internal or environmental stresses. May play a role in neuronal development and synaptic plasticity. May be required for neuronal myelin sheath maintenance. May play a role in iron uptake and iron homeostasis. Soluble oligomers are toxic to cultured neuroblastoma cells and induce apoptosis (in vitro). Association with GPC1 (via its heparan sulfate chains) targets PRNP to lipid rafts. Also provides Cu(2+) or Zn(2+) for the ascorbate-mediated GPC1 deaminase degradation of its heparan sulfate side chains. This is Major prion protein (PRNP) from Cercopithecus mona (Mona monkey).